Reading from the N-terminus, the 385-residue chain is 8-amino-7-oxononanoate synthase (385 aa).

Residue Arg21 coordinates substrate. Pyridoxal 5'-phosphate is bound at residue Gly108–Phe109. Substrate is bound at residue His133. Ser179, His207, and Thr233 together coordinate pyridoxal 5'-phosphate. At Lys236 the chain carries N6-(pyridoxal phosphate)lysine. Substrate is bound at residue Thr352.

It belongs to the class-II pyridoxal-phosphate-dependent aminotransferase family. BioF subfamily. As to quaternary structure, homodimer. Requires pyridoxal 5'-phosphate as cofactor.

The enzyme catalyses 6-carboxyhexanoyl-[ACP] + L-alanine + H(+) = (8S)-8-amino-7-oxononanoate + holo-[ACP] + CO2. Its pathway is cofactor biosynthesis; biotin biosynthesis. Catalyzes the decarboxylative condensation of pimeloyl-[acyl-carrier protein] and L-alanine to produce 8-amino-7-oxononanoate (AON), [acyl-carrier protein], and carbon dioxide. This is 8-amino-7-oxononanoate synthase from Salmonella typhimurium (strain LT2 / SGSC1412 / ATCC 700720).